The chain runs to 223 residues: MACLGLRRYKAQLQLPSRTWPFVALLTLLFIPVFSEAIQVTQPSVVLASSHGVASFPCEYSPSHNTDEVRVTVLRQTNDQMTEVCATTFTEKNTVGFLDYPFCSGTFNESRVNLTIQGLRAVDTGLYLCKVELMYPPPYFVGMGNGTQIYVIDPEPCPDSDFLLWILVAVSLGLFFYSFLVSAVSLSKMLKKRSPLTTGVYVKMPPTEPECEKQFQPYFIPIN.

The signal sequence occupies residues 1 to 35 (MACLGLRRYKAQLQLPSRTWPFVALLTLLFIPVFS). An Ig-like V-type domain is found at 36–145 (EAIQVTQPSV…PPPYFVGMGN (110 aa)). At 36–161 (EAIQVTQPSV…IDPEPCPDSD (126 aa)) the chain is on the extracellular side. Residues 46-50 (VLASS) form a homodimerization region. 2 disulfides stabilise this stretch: Cys-58-Cys-129 and Cys-85-Cys-103. N-linked (GlcNAc...) asparagine glycans are attached at residues Asn-108 and Asn-113. The segment at 134-139 (MYPPPY) is important for interaction with CD80 and CD86. A glycan (N-linked (GlcNAc...) asparagine) is linked at Asn-145. A homodimerization region spans residues 150 to 155 (YVIDPE). Residues 162-182 (FLLWILVAVSLGLFFYSFLVS) form a helical membrane-spanning segment. Over 183-223 (AVSLSKMLKKRSPLTTGVYVKMPPTEPECEKQFQPYFIPIN) the chain is Cytoplasmic. At Tyr-201 the chain carries Phosphotyrosine; by TXK and JAK2.

In terms of assembly, homodimer; disulfide-linked. Binds to CD80/B7-1 and CD86/B7.2. Interacts with ICOSLG. In terms of processing, N-glycosylation is important for dimerization. Phosphorylation at Tyr-201 prevents binding to the AP-2 adapter complex, blocks endocytosis, and leads to retention of CTLA4 on the cell surface. Widely expressed with highest levels in lymphoid tissues.

It is found in the cell membrane. In terms of biological role, inhibitory receptor acting as a major negative regulator of T-cell responses. The affinity of CTLA4 for its natural B7 family ligands, CD80 and CD86, is considerably stronger than the affinity of their cognate stimulatory coreceptor CD28. The chain is Cytotoxic T-lymphocyte protein 4 (Ctla4) from Mus musculus (Mouse).